We begin with the raw amino-acid sequence, 171 residues long: S-ribosylhomocysteine lyase (171 aa).

Positions 54, 58, and 128 each coordinate Fe cation.

Belongs to the LuxS family. As to quaternary structure, homodimer. The cofactor is Fe cation.

The catalysed reaction is S-(5-deoxy-D-ribos-5-yl)-L-homocysteine = (S)-4,5-dihydroxypentane-2,3-dione + L-homocysteine. Functionally, involved in the synthesis of autoinducer 2 (AI-2) which is secreted by bacteria and is used to communicate both the cell density and the metabolic potential of the environment. The regulation of gene expression in response to changes in cell density is called quorum sensing. Catalyzes the transformation of S-ribosylhomocysteine (RHC) to homocysteine (HC) and 4,5-dihydroxy-2,3-pentadione (DPD). This is S-ribosylhomocysteine lyase from Campylobacter curvus (strain 525.92).